The chain runs to 331 residues: Probable allantoicase (331 aa).

This sequence belongs to the allantoicase family.

The catalysed reaction is allantoate + H2O = (S)-ureidoglycolate + urea. It participates in nitrogen metabolism; (S)-allantoin degradation; (S)-ureidoglycolate from allantoate (aminidohydrolase route): step 1/1. This is Probable allantoicase from Pseudomonas fluorescens (strain Pf0-1).